Here is a 75-residue protein sequence, read N- to C-terminus: UPF0235 protein MSMEG_3845 (75 aa).

It belongs to the UPF0235 family.

This chain is UPF0235 protein MSMEG_3845, found in Mycolicibacterium smegmatis (strain ATCC 700084 / mc(2)155) (Mycobacterium smegmatis).